A 619-amino-acid chain; its full sequence is Eukaryotic translation initiation factor 2-alpha kinase 1 (619 aa).

A disordered region spans residues 1 to 40; it reads MLGGSSVDGERDTDDDAAGAVAAPPAIDFPAEVSDPKYDE. Residues 18–28 show a composition bias toward low complexity; the sequence is AGAVAAPPAID. The SIFI-degron signature appears at 85–104; sequence LHSKQVFKLLCQTFIKMGLL. Positions 167-580 constitute a Protein kinase domain; it reads FEELAILGKG…ALQLLQSELF (414 aa). ATP contacts are provided by residues 173–181 and K196; that span reads LGKGGYGRV. The residue at position 283 (T283) is a Phosphothreonine. An HRM 1 repeat occupies 408–413; that stretch reads ACPYVM. The active-site Proton acceptor is the D440. Phosphothreonine; by autocatalysis occurs at positions 483, 485, and 490. The stretch at 549–554 is one HRM 2 repeat; the sequence is RCPVQA.

The protein belongs to the protein kinase superfamily. Ser/Thr protein kinase family. GCN2 subfamily. In terms of assembly, synthesized in an inactive form that binds to the N-terminal domain of CDC37. Has to be associated with a multiprotein complex containing Hsp90, CDC37 and PPP5C for maturation and activation by autophosphorylation. The phosphatase PPP5C modulates this activation. Homodimer; homodimerizes in presence of heme, forming a disulfide-linked inactive homodimer. Interacts with DELE1; binds both to full-length DELE1 and processed form of DELE1 (S-DELE1) in response to stress, leading to activate its protein kinase activity and trigger the integrated stress response (ISR). Post-translationally, activated by autophosphorylation; phosphorylated predominantly on serine and threonine residues, but also on tyrosine residues. Autophosphorylation at Thr-485 is required for kinase activation. The active autophosphorylated form apparently is largely refractory to cellular heme fluctuations. Ubiquitinated and degraded by the SIFI complex once the mitochondrial stress has been resolved, thereby providing stress response silencing. Within the SIFI complex, UBR4 initiates ubiquitin chain that are further elongated or branched by KCMF1. Expressed predominantly in erythroid cells, mature reticulocytes, as well as fetal liver nucleated erythroid cells. At much lower levels, expressed in hepatocytes and bone marrow-derived macrophages (at protein level).

Its subcellular location is the cytoplasm. It catalyses the reaction L-seryl-[protein] + ATP = O-phospho-L-seryl-[protein] + ADP + H(+). The enzyme catalyses L-threonyl-[protein] + ATP = O-phospho-L-threonyl-[protein] + ADP + H(+). With respect to regulation, in normal conditions, the protein kinase activity is inhibited; inhibition is relieved by various stress conditions. Inhibited by heme: in presence of heme, forms a disulfide-linked inactive homodimer. Heme depletion relieves inhibition and stimulates kinase activity by autophosphorylation. Inhibited by the heme metabolites biliverdin and bilirubin. Induced by oxidative stress generated by arsenite treatment. Binding of nitric oxide (NO) to the heme iron in the N-terminal heme-binding domain activates the kinase activity, while binding of carbon monoxide (CO) suppresses kinase activity. Protein kinase activity is also activated upon binding to DELE1 in response to various stress, triggering the integrated stress response (ISR): activated by full-length DELE1 in response to iron deficiency, while it is activated by the processed form of DELE1 (S-DELE1) in response to mitochondrial stress. Its function is as follows. Metabolic-stress sensing protein kinase that phosphorylates the alpha subunit of eukaryotic translation initiation factor 2 (EIF2S1/eIF-2-alpha) in response to various stress conditions. Key activator of the integrated stress response (ISR) required for adaptation to various stress, such as heme deficiency, oxidative stress, osmotic shock, mitochondrial dysfunction and heat shock. EIF2S1/eIF-2-alpha phosphorylation in response to stress converts EIF2S1/eIF-2-alpha in a global protein synthesis inhibitor, leading to a global attenuation of cap-dependent translation, while concomitantly initiating the preferential translation of ISR-specific mRNAs, such as the transcriptional activator ATF4, and hence allowing ATF4-mediated reprogramming. Acts as a key sensor of heme-deficiency: in normal conditions, binds hemin via a cysteine thiolate and histidine nitrogenous coordination, leading to inhibit the protein kinase activity. This binding occurs with moderate affinity, allowing it to sense the heme concentration within the cell: heme depletion relieves inhibition and stimulates kinase activity, activating the ISR. Thanks to this unique heme-sensing capacity, plays a crucial role to shut off protein synthesis during acute heme-deficient conditions. In red blood cells (RBCs), controls hemoglobin synthesis ensuring a coordinated regulation of the synthesis of its heme and globin moieties. It thereby plays an essential protective role for RBC survival in anemias of iron deficiency. Iron deficiency also triggers activation by full-length DELE1. Also activates the ISR in response to mitochondrial dysfunction: HRI/EIF2AK1 protein kinase activity is activated upon binding to the processed form of DELE1 (S-DELE1), thereby promoting the ATF4-mediated reprogramming. Also acts as an activator of mitophagy in response to mitochondrial damage: catalyzes phosphorylation of eIF-2-alpha (EIF2S1) following activation by S-DELE1, thereby promoting mitochondrial localization of EIF2S1, triggering PRKN-independent mitophagy. The chain is Eukaryotic translation initiation factor 2-alpha kinase 1 from Mus musculus (Mouse).